A 281-amino-acid polypeptide reads, in one-letter code: Very long chain fatty acid elongase 7 (281 aa).

A2 carries the post-translational modification N-acetylalanine. Residues 2-27 (AFSDLTSRTVRFYDNWIKDADPRVEN) lie on the Lumenal side of the membrane. A helical transmembrane segment spans residues 28–48 (WLLMSSPLPQTIILGLYVYFV). The Cytoplasmic segment spans residues 49 to 72 (TSLGPKLMENRKPFELKKAMITYN). A helical transmembrane segment spans residues 73-93 (FFIVLFSVYMCYEFVMSGWGT). Topologically, residues 94-115 (GYSFRCDIVDYSQSPRAMRMVH) are lumenal. A disulfide bond links C99 and C231. Residues 116–136 (TCWLYYFSKFIELFDTIFFVL) traverse the membrane as a helical segment. 3-oxoeicosanoyl-CoA is bound by residues K124, R137, K139, Q142, and H147. The Cytoplasmic segment spans residues 137–142 (RKKNSQ). Residues 143–162 (VTFLHVFHHTIMPWTWWFGV) form a helical membrane-spanning segment. The HxxHH motif motif lies at 147–151 (HVFHH). H150 serves as the catalytic Nucleophile. Residues 163–176 (KFAAGGLGTFHALL) are Lumenal-facing. Residues 177–197 (NTAVHVVMYFYYGLCAMGPAY) traverse the membrane as a helical segment. Residues Y187, K204, T208, and Q211 each contribute to the 3-oxoeicosanoyl-CoA site. Residues 198-206 (QKYLWWKKH) are Cytoplasmic-facing. Residues 207 to 227 (LTSLQLVQFVLVTVHIGQIFF) traverse the membrane as a helical segment. Topologically, residues 228 to 236 (MEDCNYQYP) are lumenal. The helical transmembrane segment at 237-257 (VFLYIIMSYGCIFLLLFLHFW) threads the bilayer. At 258 to 281 (YRAYTKGQRLPKTMENGNCKSKHH) the chain is on the cytoplasmic side. R266 is a 3-oxoeicosanoyl-CoA binding site. Positions 277–281 (KSKHH) match the Di-lysine motif motif.

Belongs to the ELO family. ELOVL7 subfamily. In terms of assembly, homodimer. Interacts with TECR.

It is found in the endoplasmic reticulum membrane. It catalyses the reaction a very-long-chain acyl-CoA + malonyl-CoA + H(+) = a very-long-chain 3-oxoacyl-CoA + CO2 + CoA. The enzyme catalyses eicosanoyl-CoA + malonyl-CoA + H(+) = 3-oxodocosanoyl-CoA + CO2 + CoA. It carries out the reaction (5Z,8Z,11Z,14Z)-eicosatetraenoyl-CoA + malonyl-CoA + H(+) = (7Z,10Z,13Z,16Z)-3-oxodocosatetraenoyl-CoA + CO2 + CoA. The catalysed reaction is (6Z,9Z,12Z)-octadecatrienoyl-CoA + malonyl-CoA + H(+) = (8Z,11Z,14Z)-3-oxoeicosatrienoyl-CoA + CO2 + CoA. It catalyses the reaction (9Z,12Z)-octadecadienoyl-CoA + malonyl-CoA + H(+) = (11Z,14Z)-3-oxoicosa-11,14-dienoyl-CoA + CO2 + CoA. The enzyme catalyses (9Z)-octadecenoyl-CoA + malonyl-CoA + H(+) = 3-oxo-(11Z)-eicosenoyl-CoA + CO2 + CoA. It carries out the reaction octadecanoyl-CoA + malonyl-CoA + H(+) = 3-oxoeicosanoyl-CoA + CO2 + CoA. The catalysed reaction is hexadecanoyl-CoA + malonyl-CoA + H(+) = 3-oxooctadecanoyl-CoA + CO2 + CoA. It catalyses the reaction (9Z,12Z,15Z)-octadecatrienoyl-CoA + malonyl-CoA + H(+) = (11Z,14Z,17Z)-3-oxoeicosatrienoyl-CoA + CO2 + CoA. It functions in the pathway lipid metabolism; fatty acid biosynthesis. Functionally, catalyzes the first and rate-limiting reaction of the four reactions that constitute the long-chain fatty acids elongation cycle. This endoplasmic reticulum-bound enzymatic process allows the addition of 2 carbons to the chain of long- and very long-chain fatty acids (VLCFAs) per cycle. Condensing enzyme with higher activity toward C18 acyl-CoAs, especially C18:3(n-3) acyl-CoAs and C18:3(n-6)-CoAs. Also active toward C20:4-, C18:0-, C18:1-, C18:2- and C16:0-CoAs, and weakly toward C20:0-CoA. Little or no activity toward C22:0-, C24:0-, or C26:0-CoAs. May participate in the production of saturated and polyunsaturated VLCFAs of different chain lengths that are involved in multiple biological processes as precursors of membrane lipids and lipid mediators. The sequence is that of Very long chain fatty acid elongase 7 from Rattus norvegicus (Rat).